Here is a 311-residue protein sequence, read N- to C-terminus: Malate dehydrogenase (311 aa).

NAD(+) contacts are provided by residues 7–13 and D34; that span reads GAAGGIG. 2 residues coordinate substrate: R81 and R87. NAD(+) is bound by residues N94 and 117–119; that span reads ITN. Substrate-binding residues include N119 and R153. Residue H177 is the Proton acceptor of the active site. M227 contributes to the NAD(+) binding site.

This sequence belongs to the LDH/MDH superfamily. MDH type 1 family. Homodimer.

The catalysed reaction is (S)-malate + NAD(+) = oxaloacetate + NADH + H(+). In terms of biological role, catalyzes the reversible oxidation of malate to oxaloacetate. The chain is Malate dehydrogenase from Colwellia psychrerythraea (strain 34H / ATCC BAA-681) (Vibrio psychroerythus).